Consider the following 125-residue polypeptide: Small ribosomal subunit protein uS12 (125 aa).

D89 is modified (3-methylthioaspartic acid).

The protein belongs to the universal ribosomal protein uS12 family. Part of the 30S ribosomal subunit. Contacts proteins S8 and S17. May interact with IF1 in the 30S initiation complex.

Its function is as follows. With S4 and S5 plays an important role in translational accuracy. In terms of biological role, interacts with and stabilizes bases of the 16S rRNA that are involved in tRNA selection in the A site and with the mRNA backbone. Located at the interface of the 30S and 50S subunits, it traverses the body of the 30S subunit contacting proteins on the other side and probably holding the rRNA structure together. The combined cluster of proteins S8, S12 and S17 appears to hold together the shoulder and platform of the 30S subunit. In Bordetella petrii (strain ATCC BAA-461 / DSM 12804 / CCUG 43448), this protein is Small ribosomal subunit protein uS12.